The sequence spans 236 residues: MSYNLTDPYEIARYIKEAKKSTPIKAYIEGDLSNCDFTNIEKFNSGDLYILFGESEEILVIIENNKDKIKNCRIEQDRRKSAIPLLDMLKVNARIEPGAIIRDKVLIGENAVIMMGAVINIGAEIGEGTMVDMNAVVGARGKLGKNVHLGAGAVVAGVLEPPSSDPCTIEDNVLIGANAVILEGIKIGKGSVVAAGSIVTTDVPENVVVAGAPAKIIKEVDVKTKDKTKLLDDLRK.

It belongs to the transferase hexapeptide repeat family. DapH subfamily.

The enzyme catalyses (S)-2,3,4,5-tetrahydrodipicolinate + acetyl-CoA + H2O = L-2-acetamido-6-oxoheptanedioate + CoA. The protein operates within amino-acid biosynthesis; L-lysine biosynthesis via DAP pathway; LL-2,6-diaminopimelate from (S)-tetrahydrodipicolinate (acetylase route): step 1/3. Catalyzes the transfer of an acetyl group from acetyl-CoA to tetrahydrodipicolinate. The chain is 2,3,4,5-tetrahydropyridine-2,6-dicarboxylate N-acetyltransferase from Clostridium botulinum (strain Langeland / NCTC 10281 / Type F).